The following is a 205-amino-acid chain: Guanylate kinase (205 aa).

The 180-residue stretch at G6–V185 folds into the Guanylate kinase-like domain. ATP is bound at residue R13–G20.

Belongs to the guanylate kinase family.

It localises to the cytoplasm. It carries out the reaction GMP + ATP = GDP + ADP. In terms of biological role, essential for recycling GMP and indirectly, cGMP. The sequence is that of Guanylate kinase from Bacillus cereus (strain ATCC 14579 / DSM 31 / CCUG 7414 / JCM 2152 / NBRC 15305 / NCIMB 9373 / NCTC 2599 / NRRL B-3711).